The following is a 649-amino-acid chain: DNA mismatch repair protein MutL (649 aa).

The segment at 339-414 (KKKTKDESVQ…VREEESWQST (76 aa)) is disordered. The span at 342 to 360 (TKDESVQEQFHFEHTKPKE) shows a compositional bias: basic and acidic residues. Over residues 388-402 (PQLWQQPKQEWQPPQ) the composition is skewed to low complexity.

The protein belongs to the DNA mismatch repair MutL/HexB family.

This protein is involved in the repair of mismatches in DNA. It is required for dam-dependent methyl-directed DNA mismatch repair. May act as a 'molecular matchmaker', a protein that promotes the formation of a stable complex between two or more DNA-binding proteins in an ATP-dependent manner without itself being part of a final effector complex. This chain is DNA mismatch repair protein MutL, found in Bacillus cytotoxicus (strain DSM 22905 / CIP 110041 / 391-98 / NVH 391-98).